Reading from the N-terminus, the 175-residue chain is Disulfide bond formation protein B 2 (175 aa).

Over 1-9 (MYLARTRFL) the chain is Cytoplasmic. The helical transmembrane segment at 10–26 (FFLASLACASIIGTAFY) threads the bilayer. The Periplasmic portion of the chain corresponds to 27–44 (LQQTFGLDPCFLCLIQRA). Cysteine 36 and cysteine 39 are joined by a disulfide. A helical membrane pass occupies residues 45–61 (AIIACGVLALCAACHAP). Residues 62–68 (GPTGMRR) are Cytoplasmic-facing. The helical transmembrane segment at 69–85 (YSLGFLLIALTGLVTAG) threads the bilayer. Residues 86 to 142 (AQVWLQTASADQLIPFITKLEHLLSLLSLDMCIDRLRSDAMFCAEITWTLFGISLPE) lie on the Periplasmic side of the membrane. The chain crosses the membrane as a helical span at residues 143–161 (WSLLAFTGLALLPLYPLFS). Residues 162-175 (EFSHWLATKDRARY) are Cytoplasmic-facing.

It belongs to the DsbB family.

The protein localises to the cell inner membrane. In terms of biological role, required for disulfide bond formation in some periplasmic proteins. Acts by oxidizing the DsbA protein. This is Disulfide bond formation protein B 2 from Pseudomonas savastanoi pv. phaseolicola (strain 1448A / Race 6) (Pseudomonas syringae pv. phaseolicola (strain 1448A / Race 6)).